Reading from the N-terminus, the 92-residue chain is Small ribosomal subunit protein uS19 (92 aa).

This sequence belongs to the universal ribosomal protein uS19 family.

Its function is as follows. Protein S19 forms a complex with S13 that binds strongly to the 16S ribosomal RNA. The chain is Small ribosomal subunit protein uS19 from Aliivibrio fischeri (strain ATCC 700601 / ES114) (Vibrio fischeri).